The sequence spans 397 residues: Phosphoglycerate kinase (397 aa).

Substrate contacts are provided by residues 23-25, Arg38, 61-64, Arg122, and Arg155; these read DFN and HMGK. Residues Lys206, Gly296, Glu327, and 353-356 contribute to the ATP site; that span reads GGDS.

Belongs to the phosphoglycerate kinase family. Monomer.

It is found in the cytoplasm. It carries out the reaction (2R)-3-phosphoglycerate + ATP = (2R)-3-phospho-glyceroyl phosphate + ADP. It functions in the pathway carbohydrate degradation; glycolysis; pyruvate from D-glyceraldehyde 3-phosphate: step 2/5. The polypeptide is Phosphoglycerate kinase (Clostridium perfringens (strain ATCC 13124 / DSM 756 / JCM 1290 / NCIMB 6125 / NCTC 8237 / Type A)).